Consider the following 140-residue polypeptide: Thioredoxin H9 (140 aa).

The N-myristoyl glycine moiety is linked to residue Gly2. A lipid anchor (S-palmitoyl cysteine) is attached at Cys4. Ser14 carries the post-translational modification Phosphoserine. The 105-residue stretch at 25–129 (VHLITTKESW…PELQKKVTSI (105 aa)) folds into the Thioredoxin domain. Active-site nucleophile residues include Cys57 and Cys60. Cys57 and Cys60 are disulfide-bonded. Phosphoserine is present on Ser136.

Belongs to the thioredoxin family. Plant H-type subfamily. As to expression, ubiquitous.

Its subcellular location is the cell membrane. Its function is as follows. Probable thiol-disulfide oxidoreductase that may play a role in intercellular communication due to its ability to move from cell to cell. The polypeptide is Thioredoxin H9 (TRX9) (Arabidopsis thaliana (Mouse-ear cress)).